The chain runs to 505 residues: ATP nucleosidase Cap17 (505 aa).

Positions 1–229 (MTNTNNEYVL…RLSEIAVELL (229 aa)) are cyclic oligonucleotide sensing-domain. A purine nucleoside phosphorylase domain region spans residues 239–505 (LHTPSVLILT…DYLQHGWIRA (267 aa)).

This sequence belongs to the Cap17 family.

The enzyme catalyses ATP + H2O = D-ribose 5-triphosphate + adenine. The catalysed reaction is dATP + H2O = 2-deoxyribose 5-triphosphate + adenine. Effector protein with (d)ATP degrading activity of a CBASS antivirus system. CBASS (cyclic oligonucleotide-based antiphage signaling system) provides immunity against bacteriophage. A CD-NTase protein synthesizes cyclic nucleotides in response to infection; these serve as specific second messenger signals. The signals activate a diverse range of effectors, leading to bacterial cell death and thus abortive phage infection. A type III CBASS system. Expression of this CBASS system (Cap18-Cap6-Cap7-CdnC-CapW-Cap17) in a susceptible E.coli (strain MG1655) confers resistance to bacteriophage P1, leading to cell lysis. By 50 minutes post-infection, ATP levels are markedly reduced while dATP has been eliminated. The C-terminal purine nucleoside phosphorylase (PNP) domain cleaves the N-glycosidic bond of (d)ATP to release adenine and a sugar triphosphate; has no activity on other (d)NTPs, nor on DNA or RNA. In vivo during phage infection has pleoitropic effects on nucleotide accumulation. This protein may be activated by the cognate CD-NTase (CdnC). The sequence is that of ATP nucleosidase Cap17 from Escherichia coli (strain KTE188).